A 617-amino-acid polypeptide reads, in one-letter code: MPDYRSKTSTHGRNMAGARALWRATGMKTEDFGKPIIAVANSFTQFVPGHVHLKDMGQLVAGVIEEAGGIAKEFNTIAVDDGIAMGHDGMLYSLPSRDLIADSVEYMCNAHCADALVCISNCDKITPGMMMAAMRLNIPTIFVTGGPMESGKTVLGGMEIKLDLVDAMVMAADDHCSDSDINDVEVSACPTCGSCSGMFTANSMNCLAEALGIALPGNGTTLATHADRRHLFEEAGRRIVELAKLYYEKDDEGVLPRSIATVEAFENAMALDVAMGGSTNTVLHLLAIAREAEVNFTMADMDRISRNVPCLVKVAPNSKDYHMEDVHRAGGIMRILGELDRGELLNRDVKTVHASTMAAAIDLWDITRTDDEAVKTFYRAAPGNVRTTEAFSQNKRWKTLDDDDANGCIRSVEHAYTKEGGLAVLYGNIALDGCIVKTAGVDEEIFKFSGPARIYESQDAAVAAILGDEVKSGDVVLIRYEGPKGGPGMQEMLYPTSYLKSKGLGKECALLTDGRFSGGTSGLSIGHCSPEAAEGGNIGLVEEGDLIKIDIPNRTISVDLTDEELAERRQAMVAKGKAAWKPAEPRTRKVSAALRAYAAMTTSAAFGAVRNVEQIEH.

Position 81 (Asp-81) interacts with Mg(2+). Cys-122 serves as a coordination point for [2Fe-2S] cluster. Mg(2+) contacts are provided by Asp-123 and Lys-124. Lys-124 carries the N6-carboxylysine modification. Residue Cys-195 participates in [2Fe-2S] cluster binding. Glu-491 is a binding site for Mg(2+). The Proton acceptor role is filled by Ser-517.

Belongs to the IlvD/Edd family. In terms of assembly, homodimer. [2Fe-2S] cluster serves as cofactor. Mg(2+) is required as a cofactor.

It carries out the reaction (2R)-2,3-dihydroxy-3-methylbutanoate = 3-methyl-2-oxobutanoate + H2O. It catalyses the reaction (2R,3R)-2,3-dihydroxy-3-methylpentanoate = (S)-3-methyl-2-oxopentanoate + H2O. It participates in amino-acid biosynthesis; L-isoleucine biosynthesis; L-isoleucine from 2-oxobutanoate: step 3/4. It functions in the pathway amino-acid biosynthesis; L-valine biosynthesis; L-valine from pyruvate: step 3/4. Its function is as follows. Functions in the biosynthesis of branched-chain amino acids. Catalyzes the dehydration of (2R,3R)-2,3-dihydroxy-3-methylpentanoate (2,3-dihydroxy-3-methylvalerate) into 2-oxo-3-methylpentanoate (2-oxo-3-methylvalerate) and of (2R)-2,3-dihydroxy-3-methylbutanoate (2,3-dihydroxyisovalerate) into 2-oxo-3-methylbutanoate (2-oxoisovalerate), the penultimate precursor to L-isoleucine and L-valine, respectively. The chain is Dihydroxy-acid dehydratase from Hydrogenovibrio crunogenus (strain DSM 25203 / XCL-2) (Thiomicrospira crunogena).